We begin with the raw amino-acid sequence, 123 residues long: Small ribosomal subunit protein uS12 (123 aa).

Positions 1 to 32 (MPTIQQLVRKGRKDKKAKVKTAALKGSPQRRG) are disordered. Residues 9–19 (RKGRKDKKAKV) show a composition bias toward basic residues. At Asp-89 the chain carries 3-methylthioaspartic acid.

This sequence belongs to the universal ribosomal protein uS12 family. In terms of assembly, part of the 30S ribosomal subunit. Contacts proteins S8 and S17. May interact with IF1 in the 30S initiation complex.

Functionally, with S4 and S5 plays an important role in translational accuracy. Its function is as follows. Interacts with and stabilizes bases of the 16S rRNA that are involved in tRNA selection in the A site and with the mRNA backbone. Located at the interface of the 30S and 50S subunits, it traverses the body of the 30S subunit contacting proteins on the other side and probably holding the rRNA structure together. The combined cluster of proteins S8, S12 and S17 appears to hold together the shoulder and platform of the 30S subunit. The sequence is that of Small ribosomal subunit protein uS12 from Corynebacterium kroppenstedtii (strain DSM 44385 / JCM 11950 / CIP 105744 / CCUG 35717).